Consider the following 89-residue polypeptide: Inner kinetochore subunit mhf2 (89 aa).

This sequence belongs to the CENP-X/MHF2 family. The MHF histone-fold complex is a heterotetramer of 2 mhf1-mhf2 heterodimers. Component of the inner kinetochore constitutive centromere-associated network (CCAN) (also known as central kinetochore Sim4 complex in fission yeast), which is composed of at least cnl2, cnp3, cnp20, fta1, fta2, fta3, fta4, fta6, fta7, mal2, mhf1, mhf2, mis6, mis15, mis17, sim4 and wip1.

It localises to the nucleus. Its subcellular location is the cytoplasm. Component of a FANCM-MHF complex that promotes gene conversion at blocked replication forks, probably by reversal of the stalled fork. FANCM-MHF promotes non-crossover recombination. The chain is Inner kinetochore subunit mhf2 from Schizosaccharomyces pombe (strain 972 / ATCC 24843) (Fission yeast).